The following is an 88-amino-acid chain: Putative membrane protein insertion efficiency factor (88 aa).

The disordered stretch occupies residues 65–88 (LDFVPPKKDKNDDSGHTCKAHHHH). Over residues 69–80 (PPKKDKNDDSGH) the composition is skewed to basic and acidic residues.

Belongs to the UPF0161 family.

Its subcellular location is the cell membrane. Its function is as follows. Could be involved in insertion of integral membrane proteins into the membrane. The chain is Putative membrane protein insertion efficiency factor from Listeria innocua serovar 6a (strain ATCC BAA-680 / CLIP 11262).